Here is a 126-residue protein sequence, read N- to C-terminus: Aspartate 1-decarboxylase (126 aa).

Serine 25 acts as the Schiff-base intermediate with substrate; via pyruvic acid in catalysis. Serine 25 carries the pyruvic acid (Ser) modification. Threonine 57 is a binding site for substrate. Tyrosine 58 serves as the catalytic Proton donor. Substrate is bound at residue 73–75 (GAA).

This sequence belongs to the PanD family. Heterooctamer of four alpha and four beta subunits. Requires pyruvate as cofactor. Is synthesized initially as an inactive proenzyme, which is activated by self-cleavage at a specific serine bond to produce a beta-subunit with a hydroxyl group at its C-terminus and an alpha-subunit with a pyruvoyl group at its N-terminus.

It is found in the cytoplasm. The enzyme catalyses L-aspartate + H(+) = beta-alanine + CO2. Its pathway is cofactor biosynthesis; (R)-pantothenate biosynthesis; beta-alanine from L-aspartate: step 1/1. Catalyzes the pyruvoyl-dependent decarboxylation of aspartate to produce beta-alanine. This is Aspartate 1-decarboxylase from Halorhodospira halophila (strain DSM 244 / SL1) (Ectothiorhodospira halophila (strain DSM 244 / SL1)).